Consider the following 602-residue polypeptide: CDPK-related protein kinase (602 aa).

The disordered stretch occupies residues 1–59; the sequence is MGICVSKPSPEPDLHNHHTSIPVNDTSLPPQDNSIPPKDIAIPAQDNNKPPGKKSPFLP. Positions 19-34 are enriched in polar residues; it reads TSIPVNDTSLPPQDNS. 3 consecutive repeat copies span residues 20 to 26, 27 to 33, and 34 to 40. Positions 20–40 are 3 X 7 AA tandem repeats of S-[LI]-P-X-X-D-X; it reads SIPVNDTSLPPQDNSIPPKDI. Positions 148–410 constitute a Protein kinase domain; sequence FEVGEEVGRG…AAQALCHSWI (263 aa). Residues 154–162 and K180 each bind ATP; that span reads VGRGHFGYT. Catalysis depends on D276, which acts as the Proton acceptor. EF-hand domains follow at residues 451–486, 487–527, 528–563, and 564–602; these read VDEL…RNST, DAMK…LEAL, DRWE…LGPS, and IPVH…AKAQ.

Belongs to the protein kinase superfamily. CAMK Ser/Thr protein kinase family. CaMK subfamily.

It catalyses the reaction L-seryl-[protein] + ATP = O-phospho-L-seryl-[protein] + ADP + H(+). The catalysed reaction is L-threonyl-[protein] + ATP = O-phospho-L-threonyl-[protein] + ADP + H(+). In Daucus carota (Wild carrot), this protein is CDPK-related protein kinase (CRK).